The chain runs to 474 residues: Serine/threonine-protein kinase VRK3 (474 aa).

Polar residues predominate over residues 41 to 58 (HVSSFQGSKRGLNSSFET). The interval 41-152 (HVSSFQGSKR…SRVTTSLEAL (112 aa)) is disordered. The short motif at 49-64 (KRGLNSSFETSPKKVK) is the Nuclear localization signal element. A phosphoserine mark is found at Ser54, Ser55, Ser59, Ser82, Ser83, and Ser90. The span at 88-101 (TLSSSERSKGSGSR) shows a compositional bias: low complexity. The segment covering 107 to 149 (SSPQKTRKSPQVTRGSPQKTSCSPQKTRQSPQTLKRSRVTTSL) has biased composition (polar residues). The residue at position 108 (Ser108) is a Phosphoserine; by CDK5. Ser115 and Ser122 each carry phosphoserine. A Protein kinase domain is found at 166–457 (WKLKSFQTRD…MLRNNLEALL (292 aa)).

The protein belongs to the protein kinase superfamily. CK1 Ser/Thr protein kinase family. VRK subfamily. Interacts with DUSP3. Interacts with RAN. Interacts with HSP70/HSPA1A. In terms of processing, phosphorylated at Ser-108 by CDK5; leading to protection of the cell against H2O2-induced apoptosis. Post-translationally, ubiquitinated by RNF144A.

The protein resides in the nucleus. Its subcellular location is the cytoplasm. It carries out the reaction L-seryl-[protein] + ATP = O-phospho-L-seryl-[protein] + ADP + H(+). Functionally, plays a role in the regulation of the cell cycle by phosphorylating the nuclear envelope protein barrier-to-autointegration factor/BAF that is required for disassembly and reassembly, respectively, of the nuclear envelope during mitosis. Under normal physiological conditions, negatively regulates ERK activity along with VHR/DUSP3 phosphatase in the nucleus, causing timely and transient action of ERK. Stress conditions activate CDK5 which phosphorylates VRK3 to increase VHR phosphatase activity and suppress prolonged ERK activation that causes cell death. For example, upon glutamate induction, promotes nuclear localization of HSP70/HSPA1A to inhibit ERK activation via VHR/DUSP3 phosphatase. This Homo sapiens (Human) protein is Serine/threonine-protein kinase VRK3 (VRK3).